The sequence spans 104 residues: Large ribosomal subunit protein uL24 (104 aa).

The protein belongs to the universal ribosomal protein uL24 family. In terms of assembly, part of the 50S ribosomal subunit.

Its function is as follows. One of two assembly initiator proteins, it binds directly to the 5'-end of the 23S rRNA, where it nucleates assembly of the 50S subunit. One of the proteins that surrounds the polypeptide exit tunnel on the outside of the subunit. The polypeptide is Large ribosomal subunit protein uL24 (Aliivibrio fischeri (strain ATCC 700601 / ES114) (Vibrio fischeri)).